A 512-amino-acid chain; its full sequence is Tyrosine-protein kinase Lyn (512 aa).

Residues 1 to 45 (MGCIKSKRKDNLNDDEVDSKTQPVRNTDRTIYVRDPTSNKQQRPV) are disordered. A lipid anchor (N-myristoyl glycine) is attached at glycine 2. Residue cysteine 3 is the site of S-palmitoyl cysteine attachment. The residue at position 19 (serine 19) is a Phosphoserine. An SH3 domain is found at 63–123 (EQGDIVVALY…PSNYVAKVNT (61 aa)). The SH2 domain occupies 129–226 (WFFKDITRKD…GLCRRLEKAC (98 aa)). Residue tyrosine 193 is modified to Phosphotyrosine. Serine 228 bears the Phosphoserine mark. One can recognise a Protein kinase domain in the interval 247–501 (IKLVKKLGAG…YLQSVLDDFY (255 aa)). ATP contacts are provided by residues 253-261 (LGAGQFGEV) and lysine 275. A phosphotyrosine mark is found at tyrosine 306 and tyrosine 316. Aspartate 367 serves as the catalytic Proton acceptor. Tyrosine 397 is modified (phosphotyrosine; by autocatalysis). Residues tyrosine 460 and tyrosine 473 each carry the phosphotyrosine modification. Tyrosine 508 is modified (phosphotyrosine; by autocatalysis, CSK and MATK).

This sequence belongs to the protein kinase superfamily. Tyr protein kinase family. SRC subfamily. In terms of assembly, interacts with TEC. Interacts (via SH2 domain) with FLT3 (tyrosine phosphorylated). Interacts with LIME1 and with CD79A upon activation of the B-cell antigen receptor. Interacts with the B-cell receptor complex. Interacts with phosphorylated THEMIS2. Interacts with EPOR. Interacts with MS4A2/FCER1B. Interaction (via the SH2 and SH3 domains) with MUC1 is stimulated by IL7 and the subsequent phosphorylation increases the binding between MUC1 and CTNNB1/beta-catenin. Interacts with ADAM15. Interacts with NDFIP2 and more weakly with NDFIP1. Interacts with FASLG. Interacts with KIT. Interacts with HCLS1. Interacts with FCGR2B. Interacts with FCGR1A; the interaction may be indirect. Interacts with CD19, CD22, CD79A and CD79B. Interacts (via SH3 domain) with CBLC, PPP1R15A and PDE4A. Interacts with TGFB1I1. Interacts (via SH3 domain) with PIK3R1, the regulatory subunit of phosphatidylinositol 3-kinase; this interaction enhances phosphatidylinositol 3-kinase activity. Interacts with CSF2RB, the common subunit of the IL3, IL5 and CSF2 receptors. Interacts with PAG1; identified in a complex with PAG1 and STAT3. Interacts with ABL1. Interacts with PTPN6/SHP-1. Interacts (via SH3 domain) with SCIMP (via proline-rich region). This interaction facilitates the phosphorylation of SCIMP on 'Tyr-96', which enhances binding of SCIMP to TLR4, and consequently the phosphorylation of TLR4 in response to stimulation by lipopolysaccharide in macrophages. Interacts with LPXN (via LD motif 3) and the interaction is induced upon B-cell antigen receptor (BCR) activation. Interacts (via SH3-domain) with ANKRD54 (via ankyrin repeat region) in an activation-independent status of LYN. Forms a multiprotein complex with ANKRD54 and HCLS1. Interacts (via SH2 and SH3 domains) with UNC119; leading to LYN activation. Interacts with CD36. Interacts with LYN. Interacts with SKAP1 and FYB1; this interaction promotes the phosphorylation of CLNK. Interacts with BCAR1/CAS and NEDD9/HEF1. Ubiquitinated by CBL, leading to its degradation. In terms of processing, autophosphorylated. Phosphorylated on tyrosine residues in response to KIT signaling. Phosphorylation at Tyr-397 is required for optimal activity. Phosphorylation at Tyr-508 inhibits kinase activity. Phosphorylated at Tyr-508 by CSK. Dephosphorylated by PTPRC/CD45. Becomes rapidly phosphorylated upon activation of the B-cell receptor and the immunoglobulin receptor FCGR1A. Phosphorylated in response to ITGB1 in B-cells. In terms of tissue distribution, detected in bone marrow-derived monocytes and macrophages (at protein level). Expressed predominantly in B-lymphoid and myeloid cells.

The protein localises to the cell membrane. Its subcellular location is the nucleus. It localises to the cytoplasm. It is found in the perinuclear region. The protein resides in the golgi apparatus. The protein localises to the membrane. It catalyses the reaction L-tyrosyl-[protein] + ATP = O-phospho-L-tyrosyl-[protein] + ADP + H(+). With respect to regulation, subject to autoinhibition, mediated by intramolecular interactions between the SH2 domain and the C-terminal phosphotyrosine. Phosphorylation at Tyr-397 is required for optimal activity. Phosphorylated by CSK at Tyr-508; phosphorylation at Tyr-508 inhibits kinase activity. Kinase activity is modulated by dephosphorylation by PTPRC/CD45. Inhibited by dasatinib, PP2, and SU6656. Functionally, non-receptor tyrosine-protein kinase that transmits signals from cell surface receptors and plays an important role in the regulation of innate and adaptive immune responses, hematopoiesis, responses to growth factors and cytokines, integrin signaling, but also responses to DNA damage and genotoxic agents. Functions primarily as negative regulator, but can also function as activator, depending on the context. Required for the initiation of the B-cell response, but also for its down-regulation and termination. Plays an important role in the regulation of B-cell differentiation, proliferation, survival and apoptosis, and is important for immune self-tolerance. Acts downstream of several immune receptors, including the B-cell receptor, CD79A, CD79B, CD5, CD19, CD22, FCER1, FCGR2, FCGR1A, TLR2 and TLR4. Plays a role in the inflammatory response to bacterial lipopolysaccharide. Mediates the responses to cytokines and growth factors in hematopoietic progenitors, platelets, erythrocytes, and in mature myeloid cells, such as dendritic cells, neutrophils and eosinophils. Acts downstream of EPOR, KIT, MPL, the chemokine receptor CXCR4, as well as the receptors for IL3, IL5 and CSF2. Plays an important role in integrin signaling. Regulates cell proliferation, survival, differentiation, migration, adhesion, degranulation, and cytokine release. Involved in the regulation of endothelial activation, neutrophil adhesion and transendothelial migration. Down-regulates signaling pathways by phosphorylation of immunoreceptor tyrosine-based inhibitory motifs (ITIM), that then serve as binding sites for phosphatases, such as PTPN6/SHP-1, PTPN11/SHP-2 and INPP5D/SHIP-1, that modulate signaling by dephosphorylation of kinases and their substrates. Phosphorylates LIME1 in response to CD22 activation. Phosphorylates BTK, CBL, CD5, CD19, CD72, CD79A, CD79B, CSF2RB, DOK1, HCLS1, MS4A2/FCER1B, SYK and TEC. Phosphorylates PIRB at Tyr-794 and Tyr-824, which is required for PIRB interaction with PTPN6/SHP-1 and PTPN11/SHP-2. Promotes phosphorylation of SIRPA, PTPN6/SHP-1, PTPN11/SHP-2 and INPP5D/SHIP-1. Required for rapid phosphorylation of FER in response to FCER1 activation. Mediates KIT phosphorylation. Acts as an effector of EPOR (erythropoietin receptor) in controlling KIT expression and may play a role in erythroid differentiation during the switch between proliferation and maturation. Depending on the context, activates or inhibits several signaling cascades. Regulates phosphatidylinositol 3-kinase activity and AKT1 activation. Regulates activation of the MAP kinase signaling cascade, including activation of MAP2K1/MEK1, MAPK1/ERK2, MAPK3/ERK1, MAPK8/JNK1 and MAPK9/JNK2. Mediates activation of STAT5A and/or STAT5B. Phosphorylates LPXN on 'Tyr-72'. Kinase activity facilitates TLR4-TLR6 heterodimerization and signal initiation. Phosphorylates SCIMP on 'Tyr-96'; this enhances binding of SCIMP to TLR4, promoting the phosphorylation of TLR4, and a selective cytokine response to lipopolysaccharide in macrophages. Phosphorylates CLNK. Phosphorylates BCAR1/CAS and NEDD9/HEF1. The chain is Tyrosine-protein kinase Lyn (Lyn) from Mus musculus (Mouse).